Reading from the N-terminus, the 180-residue chain is MKLLLLLCLELTLVYVHAEEASSEGQNLNVEKINGKWFSILLASDKREKIEEHGTMRVFVEHIDVLENSLAFKFHTVIDEECTEIYLVADKTEKAGEYSVTYDGFNTFTILKTDYDNYIMFHLINKKDEENFQLMELFGREPDLSSDIKEKFAKLCEEHGIVRENIIDLSNANRCLQARE.

Positions 1–18 are cleaved as a signal peptide; the sequence is MKLLLLLCLELTLVYVHA. The cysteines at positions 82 and 175 are disulfide-linked.

It belongs to the calycin superfamily. Lipocalin family.

It localises to the secreted. Major urinary proteins (Mups) bind pheromones, and thus stabilize them to allow slow release into the air from urine marks. May protect pheromones from oxidation. May also act as pheromones themselves. In this context, they play a role in the regulation of social behaviors, such as aggression, mating, pup-suckling, territory establishment and dominance. In Mus musculus (Mouse), this protein is Major urinary protein 5.